The primary structure comprises 88 residues: Large ribosomal subunit protein bL27 (88 aa).

The segment at Met1–Leu21 is disordered.

Belongs to the bacterial ribosomal protein bL27 family.

The polypeptide is Large ribosomal subunit protein bL27 (Helicobacter pylori (strain J99 / ATCC 700824) (Campylobacter pylori J99)).